The sequence spans 497 residues: Serine hydroxymethyltransferase (497 aa).

(6S)-5,6,7,8-tetrahydrofolate contacts are provided by residues L176 and 180 to 182 (GHL). An N6-(pyridoxal phosphate)lysine modification is found at K289. (6S)-5,6,7,8-tetrahydrofolate is bound at residue E306.

The protein belongs to the SHMT family. In terms of assembly, homodimer. Pyridoxal 5'-phosphate is required as a cofactor.

It is found in the cytoplasm. It carries out the reaction (6R)-5,10-methylene-5,6,7,8-tetrahydrofolate + glycine + H2O = (6S)-5,6,7,8-tetrahydrofolate + L-serine. The protein operates within one-carbon metabolism; tetrahydrofolate interconversion. It participates in amino-acid biosynthesis; glycine biosynthesis; glycine from L-serine: step 1/1. In terms of biological role, catalyzes the reversible interconversion of serine and glycine with tetrahydrofolate (THF) serving as the one-carbon carrier. This reaction serves as the major source of one-carbon groups required for the biosynthesis of purines, thymidylate, methionine, and other important biomolecules. Also exhibits THF-independent aldolase activity toward beta-hydroxyamino acids, producing glycine and aldehydes, via a retro-aldol mechanism. The polypeptide is Serine hydroxymethyltransferase (Chlamydia pneumoniae (Chlamydophila pneumoniae)).